The primary structure comprises 73 residues: Beta-defensin 50 (73 aa).

The N-terminal stretch at 1 to 23 (MKTLCFLLLTSGLLYLMVKGVGS) is a signal peptide. Disulfide bonds link Cys34/Cys63 and Cys46/Cys64.

Belongs to the beta-defensin family. In terms of tissue distribution, highly expressed in prostate. Not expressed in uterus, epididymis, ovary, testis, spleen, submaxillary gland, thymus, thyroid, pancreas, smooth muscle, skeletal muscle, heart, kidney, lung, liver, eye and brain.

It localises to the secreted. Its function is as follows. Has bactericidal activity. In Mus musculus (Mouse), this protein is Beta-defensin 50 (Defb50).